The chain runs to 78 residues: MANIKSAIKRAELNVKQNEKNSAQKSALRTVIKAFKANPTEEAFRAASASIDKAASKGLIHKNKASRDKSRLAAKLAN.

This sequence belongs to the bacterial ribosomal protein bS20 family.

Functionally, binds directly to 16S ribosomal RNA. The polypeptide is Small ribosomal subunit protein bS20 (Streptococcus thermophilus (strain ATCC BAA-491 / LMD-9)).